Reading from the N-terminus, the 159-residue chain is Dynein 18 kDa light chain, flagellar outer arm (159 aa).

3 EF-hand domains span residues 18 to 53, 54 to 89, and 129 to 159; these read EEMD…LGQN, PTEE…NKQM, and ELTV…ALLS. The Ca(2+) site is built by Asp-31, Asp-33, Ser-35, Thr-37, Glu-42, Asp-67, Asp-69, Ser-71, Cys-73, and Glu-78.

As to quaternary structure, consists of at least 3 heavy chains (alpha, beta and gamma), 2 intermediate chains and 8 light chains.

It is found in the cell projection. Its subcellular location is the cilium. The protein resides in the flagellum. Functionally, may be involved in the calcium-mediated regulation of dynein motor function. Binds 1 mole of calcium. The protein is Dynein 18 kDa light chain, flagellar outer arm of Chlamydomonas reinhardtii (Chlamydomonas smithii).